A 302-amino-acid polypeptide reads, in one-letter code: Acetylglutamate kinase (302 aa).

Residues 68-69 (GG), Arg-90, and Asn-195 each bind substrate.

It belongs to the acetylglutamate kinase family. ArgB subfamily.

Its subcellular location is the cytoplasm. It catalyses the reaction N-acetyl-L-glutamate + ATP = N-acetyl-L-glutamyl 5-phosphate + ADP. Its pathway is amino-acid biosynthesis; L-arginine biosynthesis; N(2)-acetyl-L-ornithine from L-glutamate: step 2/4. Catalyzes the ATP-dependent phosphorylation of N-acetyl-L-glutamate. This chain is Acetylglutamate kinase, found in Marinomonas sp. (strain MWYL1).